Reading from the N-terminus, the 311-residue chain is Malate dehydrogenase (311 aa).

Residues 7–13 (GAAGGIG) and aspartate 34 each bind NAD(+). Substrate-binding residues include arginine 81 and arginine 87. NAD(+)-binding positions include asparagine 94 and 117-119 (ITN). Positions 119 and 153 each coordinate substrate. Histidine 177 acts as the Proton acceptor in catalysis. Residue methionine 227 participates in NAD(+) binding.

The protein belongs to the LDH/MDH superfamily. MDH type 1 family. In terms of assembly, homodimer.

It carries out the reaction (S)-malate + NAD(+) = oxaloacetate + NADH + H(+). Its function is as follows. Catalyzes the reversible oxidation of malate to oxaloacetate. The sequence is that of Malate dehydrogenase from Shewanella amazonensis (strain ATCC BAA-1098 / SB2B).